Consider the following 293-residue polypeptide: Small ribosomal subunit biogenesis GTPase RsgA (293 aa).

A CP-type G domain is found at 63-223 (KNELVRPPIA…VADTPGFSSL (161 aa)). GTP is bound by residues 112–115 (SKMD) and 166–174 (GQSGVGKSS). 4 residues coordinate Zn(2+): cysteine 247, cysteine 252, histidine 254, and cysteine 260.

The protein belongs to the TRAFAC class YlqF/YawG GTPase family. RsgA subfamily. As to quaternary structure, monomer. Associates with 30S ribosomal subunit, binds 16S rRNA. Zn(2+) is required as a cofactor.

It localises to the cytoplasm. Functionally, one of several proteins that assist in the late maturation steps of the functional core of the 30S ribosomal subunit. Helps release RbfA from mature subunits. May play a role in the assembly of ribosomal proteins into the subunit. Circularly permuted GTPase that catalyzes slow GTP hydrolysis, GTPase activity is stimulated by the 30S ribosomal subunit. The protein is Small ribosomal subunit biogenesis GTPase RsgA of Bacillus anthracis.